We begin with the raw amino-acid sequence, 79 residues long: UPF0150 protein ssr1765 (79 aa).

It belongs to the UPF0150 family.

The sequence is that of UPF0150 protein ssr1765 from Synechocystis sp. (strain ATCC 27184 / PCC 6803 / Kazusa).